The primary structure comprises 133 residues: FK506-binding protein 2 (133 aa).

Positions 1 to 20 (MKLLYCLLLVILALVGLSSG) are cleaved as a signal peptide. The PPIase FKBP-type domain maps to 45–133 (GDKLKIHYTG…IFDVELIGIN (89 aa)).

This sequence belongs to the FKBP-type PPIase family.

It catalyses the reaction [protein]-peptidylproline (omega=180) = [protein]-peptidylproline (omega=0). Its activity is regulated as follows. Inhibited by both FK506 and rapamycin. Its function is as follows. PPIases accelerate the folding of proteins by catalyzing the cis-trans isomerization of proline imidic peptide bonds in oligopeptides. The sequence is that of FK506-binding protein 2 (fkbp2) from Dictyostelium discoideum (Social amoeba).